The chain runs to 414 residues: Probable sugar-binding periplasmic protein (414 aa).

A signal peptide spans 1–22 (MRKFMTTTAVAALMLAATAARA).

It belongs to the bacterial solute-binding protein 1 family.

The protein resides in the periplasm. Part of a binding-protein-dependent transport system for a sugar. This is Probable sugar-binding periplasmic protein from Rhizobium meliloti (strain 1021) (Ensifer meliloti).